Reading from the N-terminus, the 431-residue chain is Tol-Pal system protein TolB (431 aa).

Positions 1–24 (MMKFLTRMLSAFAVLFFAISTAQA) are cleaved as a signal peptide. Residues 318–340 (QVYRMSSSGGAASPVGGRGSAQI) are disordered. Over residues 323–332 (SSSGGAASPV) the composition is skewed to low complexity.

The protein belongs to the TolB family. In terms of assembly, the Tol-Pal system is composed of five core proteins: the inner membrane proteins TolA, TolQ and TolR, the periplasmic protein TolB and the outer membrane protein Pal. They form a network linking the inner and outer membranes and the peptidoglycan layer.

The protein localises to the periplasm. In terms of biological role, part of the Tol-Pal system, which plays a role in outer membrane invagination during cell division and is important for maintaining outer membrane integrity. The protein is Tol-Pal system protein TolB of Mannheimia succiniciproducens (strain KCTC 0769BP / MBEL55E).